Here is a 311-residue protein sequence, read N- to C-terminus: Salutaridine reductase (311 aa).

Residues 21 to 24, R44, 70 to 71, and N98 each bind NADP(+); these read NKGI and DV. Residues Y129 and S180 each contribute to the substrate site. NADP(+) is bound by residues Y236, K240, and 267–272; that span reads VKTEMN. The Proton acceptor role is filled by Y236. A disulfide bridge connects residues C263 and C305.

The protein belongs to the short-chain dehydrogenases/reductases (SDR) family.

It carries out the reaction (7S)-salutaridinol + NADP(+) = salutaridine + NADPH + H(+). It participates in alkaloid biosynthesis; morphine biosynthesis. Its activity is regulated as follows. Strong substrate inhibition. Was thought to be due to mutually exclusive productive and non-productive modes of substrate binding in the active site. Alternatively, SALR may undergo significant conformational changes during catalytic turnover. Its function is as follows. Short-chain dehydrogenases/reductases involved in biosynthesis of morphinan-type benzylisoquinoline and opiate alkaloids natural products. Catalyzes specifically the stereospecific conversion of salutaridine to salutaridinol. In Papaver somniferum (Opium poppy), this protein is Salutaridine reductase.